Consider the following 95-residue polypeptide: Small ribosomal subunit protein bS6 (95 aa).

Belongs to the bacterial ribosomal protein bS6 family.

In terms of biological role, binds together with bS18 to 16S ribosomal RNA. The sequence is that of Small ribosomal subunit protein bS6 from Corynebacterium efficiens (strain DSM 44549 / YS-314 / AJ 12310 / JCM 11189 / NBRC 100395).